We begin with the raw amino-acid sequence, 278 residues long: Large ribosomal subunit protein uL2 (278 aa).

Positions glycine 223 to lysine 278 are disordered.

Belongs to the universal ribosomal protein uL2 family. In terms of assembly, part of the 50S ribosomal subunit. Forms a bridge to the 30S subunit in the 70S ribosome.

One of the primary rRNA binding proteins. Required for association of the 30S and 50S subunits to form the 70S ribosome, for tRNA binding and peptide bond formation. It has been suggested to have peptidyltransferase activity; this is somewhat controversial. Makes several contacts with the 16S rRNA in the 70S ribosome. This Methylobacterium sp. (strain 4-46) protein is Large ribosomal subunit protein uL2.